Here is a 188-residue protein sequence, read N- to C-terminus: Elongation factor P-like protein (188 aa).

It belongs to the elongation factor P family.

This is Elongation factor P-like protein from Vibrio cholerae serotype O1 (strain ATCC 39541 / Classical Ogawa 395 / O395).